The chain runs to 717 residues: Fatty acid oxidation complex subunit alpha (717 aa).

The segment at 1-189 is enoyl-CoA hydratase/isomerase; sequence MIYQSPTIEV…NVGAIDALVA (189 aa). Position 296 (aspartate 296) interacts with substrate. Positions 311–717 are 3-hydroxyacyl-CoA dehydrogenase; it reads KKVNSAAVLG…ANNGSYYQQA (407 aa). NAD(+) contacts are provided by residues methionine 324, aspartate 343, 400–402, lysine 407, and serine 429; that span reads VVE. Catalysis depends on histidine 450, which acts as the For 3-hydroxyacyl-CoA dehydrogenase activity. Asparagine 453 contributes to the NAD(+) binding site. Substrate contacts are provided by asparagine 500 and tyrosine 660.

In the N-terminal section; belongs to the enoyl-CoA hydratase/isomerase family. The protein in the C-terminal section; belongs to the 3-hydroxyacyl-CoA dehydrogenase family. As to quaternary structure, heterotetramer of two alpha chains (FadB) and two beta chains (FadA).

The catalysed reaction is a (3S)-3-hydroxyacyl-CoA + NAD(+) = a 3-oxoacyl-CoA + NADH + H(+). It catalyses the reaction a (3S)-3-hydroxyacyl-CoA = a (2E)-enoyl-CoA + H2O. The enzyme catalyses a 4-saturated-(3S)-3-hydroxyacyl-CoA = a (3E)-enoyl-CoA + H2O. It carries out the reaction (3S)-3-hydroxybutanoyl-CoA = (3R)-3-hydroxybutanoyl-CoA. The catalysed reaction is a (3Z)-enoyl-CoA = a 4-saturated (2E)-enoyl-CoA. It catalyses the reaction a (3E)-enoyl-CoA = a 4-saturated (2E)-enoyl-CoA. The protein operates within lipid metabolism; fatty acid beta-oxidation. In terms of biological role, involved in the aerobic and anaerobic degradation of long-chain fatty acids via beta-oxidation cycle. Catalyzes the formation of 3-oxoacyl-CoA from enoyl-CoA via L-3-hydroxyacyl-CoA. It can also use D-3-hydroxyacyl-CoA and cis-3-enoyl-CoA as substrate. The protein is Fatty acid oxidation complex subunit alpha of Shewanella piezotolerans (strain WP3 / JCM 13877).